Here is a 385-residue protein sequence, read N- to C-terminus: GTP cyclohydrolase-2 (385 aa).

The DHBP synthase-like stretch occupies residues 1 to 189 (MYADAPSDSA…RDIADYRVHV (189 aa)). The segment at 190–385 (VRTLRRVAEA…TKAERSGHMF (196 aa)) is GTP cyclohydrolase II. 240–244 (RLHSE) is a binding site for GTP. Residues C245, C256, and C258 each coordinate Zn(2+). GTP is bound by residues Q261, 283–285 (EGR), and T305. D317 serves as the catalytic Proton acceptor. Catalysis depends on R319, which acts as the Nucleophile. 2 residues coordinate GTP: T340 and K345.

The protein in the N-terminal section; belongs to the DHBP synthase family. In the C-terminal section; belongs to the GTP cyclohydrolase II family. It depends on Zn(2+) as a cofactor.

The catalysed reaction is GTP + 4 H2O = 2,5-diamino-6-hydroxy-4-(5-phosphoribosylamino)-pyrimidine + formate + 2 phosphate + 3 H(+). It participates in cofactor biosynthesis; riboflavin biosynthesis; 5-amino-6-(D-ribitylamino)uracil from GTP: step 1/4. Functionally, catalyzes the conversion of GTP to 2,5-diamino-6-ribosylamino-4(3H)-pyrimidinone 5'-phosphate (DARP), formate and pyrophosphate. This Azospirillum brasilense protein is GTP cyclohydrolase-2 (ribA).